The following is a 62-amino-acid chain: Alpha-conotoxin Vt1.27 (62 aa).

Residues 1 to 21 (MGMRMMFTVFLLVVLATTVVS) form the signal peptide. The propeptide occupies 22–40 (FTLDRASDGASAAADLVAR). Disulfide bonds link Cys-46/Cys-52 and Cys-47/Cys-61.

This sequence belongs to the conotoxin A superfamily. As to expression, expressed by the venom duct.

The protein localises to the secreted. In terms of biological role, the short (45-61) amidated synthetic peptide inhibits the rat neuronal alpha-3-beta-2/CHRNA3-CHRNB2 nicotinic acetylcholine receptor (nAChR) (IC(50)=1.16 uM). It also inhibits Cav2.2/CACNA1C voltage-gated calcium channel (IC(50)=398 nM). In vivo, when tested in rat pain models, this short amidated peptide increases the pain threshold. The sequence is that of Alpha-conotoxin Vt1.27 from Conus planorbis (Planorbis cone).